Here is a 1872-residue protein sequence, read N- to C-terminus: MAQHLPPVGGNGGAHTQPSLPALPAHLQSDTHLTGHLASRFHVSLPTAKLSSHAFISINTYTSSSKGQDGGKAGSAQGEAEDMADRAFLRLGHRSENQAILFLGESGSGKTTIRSHILTALLNKTSTPLSTKVSLAAYVFDTLTTTKTATTPTASKAGLFYELQYDTASTTSPLLIGGKLLDHRLERSRITDVPTGERNFHILYYILAGTSAAEKTHLGFGEPDAGTGSKRWRYLGHPTQLKVGINDAQGFQLFKTALRKLEFPRSEIAEICQVLASILHIGQLEFESSENTTVAGDESGGFSHEGGQITTVAKNKDVLAIVAAFLGVSAAELQTTLGYKTKIIHKERVTVMLDPAGARANANELARTLYSLLVAYVIENINQKICAPEEAIVNTVSIIDFPGFSQQSSTGSSLDLLLNNAAAEAMYNLTLQNFFDRKADLLETEEVSVPPTSYFDNSDAVKGLLKTGNGLLSILDDQTRRHRTDMQLLESLRKRFEGKNPAIGVSAATAKLPGSNFLSENTAASFTVRHFAGEVEYSIKGLVEENGEVISGDLLNLVNSTKSDFIARLFGQEALHTVTHPQERTTVMQASVSSKPMRAPSVMSRKIRPGTARTTRQRKESISGRQDTLDDIASEAGDSRRPVNKPSEEGASGQFLHSLDNVTKSFHAQNTNAYFVFCLKPNDRRIANQFDSKCVRTQMQTFGIAEISQRIRSADFSVFLPFGEFLGLADVDTLLVGSEREKVEAVVDEKRWPTNEIQIGSTGVFISERCWMEIAQLSDMVTGRFGVPESEGGTPLANMPYGASKERLIAAGNSPYNNDKAKSGYFGSNDIDGRSDAGVSAFGGGDMFKNLDTREQMAERGNEKSMVEVEEFKDSPSRKRWVFITWMLTFFVPEFLIQHLGKMPRKDVRMAWREKLAINFIIWFSCLAAAFILVVFPMLVCPTQYVFTGEELSAYNGKDGKASYAAIRGQVFDIGSFIPRHPLPYLPSKLFTQYAGTDITGLFPVQVSALCQGTTGSVNPAVLLDYKDTNITDSPNVFNSQDLNSRYHDFRYFTNDTRPDWFSQMMITFRGTYKKGNIGYPAQVVQKMAQQRNAIAILNGRVYDFTKYIAGGRDFRVKYNETRPTDQSLLDFMDPSVVRLFSDRSGEDVTPLWDALRLDPTLRKSMQLCLDNLFYLGDVDTRNSVRCNFAKYFILAVTIILCSIIAFKFLAALQFGTKNMPENLDKFIMCQIPAYTEDEESLRRAIDSAARMRYDDKRKLLIVVCDGMIIGQGNDRPTPRIVLDILGVSETVDPEPLSFESLGEGLKQHNMGKVYSGLYEVQGHIVPFLVVVKVGKPSEVSRPGNRGKRDSQMVIMRFLNRVHYNLAMSPLELEMYHQIRNIIGVNPTFYEYMLQIDADTVVAADSATRFVSAFLDDTRLIACCGETSIANAKSSFITMIQVYEYYISHNLSKAFESLFGSVTCLPGCFSMYRIRAAETGKPLFVSREVVDAYATIRVDTLHMKNLLHLGEDRYLTTLLLKYHNKYKTKYIYRAHAWTIAPDSWKVFLSQRRRWINSTVHNLIELIPMGQLCGFCCFSMRFIVFIDLLSTIIQPVTIAYIVYLIVRMVLTPDLVPVLAFVLLAAVYGLQAIIFILRRKWEMIAWMILYIIAMPIFSFGLPLYAFWHMDDFTWGNTRVVTGEKGKKVVVTDEGKFDPSSIPRKKWEEYQSELWDAQTSKDDTRSEASGFSYATKAPVAVSEYGFPVNPYGAYPPSRPGSTTGIPHMPHMPYSASRMSLAHSEMLMAGNRQSQFGGSQFNLPQSGSEMELSNLAGLPSDDALLAEIREILRTADLMTVTKKGVKQELERRFGVNLDSRRAYINSATEALLSGQL.

Residues 1-23 are disordered; it reads MAQHLPPVGGNGGAHTQPSLPAL. A Myosin motor domain is found at 1–779; the sequence is MAQHLPPVGG…CWMEIAQLSD (779 aa). Residue 104 to 111 coordinates ATP; that stretch reads GESGSGKT. N-linked (GlcNAc...) asparagine glycans are attached at residues Asn-123, Asn-291, Asn-428, and Asn-559. The segment at 587-652 is disordered; it reads VMQASVSSKP…VNKPSEEGAS (66 aa). The interval 659-683 is actin-binding; that stretch reads LDNVTKSFHAQNTNAYFVFCLKPND. Residue Asn-661 is glycosylated (N-linked (GlcNAc...) asparagine). 2 helical membrane passes run 881 to 901 and 920 to 940; these read WVFI…QHLG and FIIW…PMLV. Residues 944–1003 enclose the Cytochrome b5 heme-binding domain; sequence QYVFTGEELSAYNGKDGKASYAAIRGQVFDIGSFIPRHPLPYLPSKLFTQYAGTDITGLF. N-linked (GlcNAc...) asparagine glycosylation is found at Asn-1030, Asn-1055, and Asn-1120. A helical transmembrane segment spans residues 1193–1213; sequence FILAVTIILCSIIAFKFLAAL. Asn-1450 and Asn-1556 each carry an N-linked (GlcNAc...) asparagine glycan. The next 3 membrane-spanning stretches (helical) occupy residues 1581-1601, 1614-1634, and 1641-1661; these read FIVF…AYIV, VPVL…IIFI, and MIAW…GLPL. The DEK-C domain maps to 1814 to 1869; that stretch reads LPSDDALLAEIREILRTADLMTVTKKGVKQELERRFGVNLDSRRAYINSATEALLS.

It belongs to the chitin synthase family. Class V subfamily.

Its subcellular location is the cell membrane. The enzyme catalyses [(1-&gt;4)-N-acetyl-beta-D-glucosaminyl](n) + UDP-N-acetyl-alpha-D-glucosamine = [(1-&gt;4)-N-acetyl-beta-D-glucosaminyl](n+1) + UDP + H(+). Its function is as follows. Polymerizes chitin, a structural polymer of the cell wall and septum, by transferring the sugar moiety of UDP-GlcNAc to the non-reducing end of the growing chitin polymer. Required for appressorium penetration and invasive growth. The polypeptide is Chitin synthase 6 (Pyricularia oryzae (strain 70-15 / ATCC MYA-4617 / FGSC 8958) (Rice blast fungus)).